The chain runs to 605 residues: Alpha-1,3-galactosidase A (605 aa).

The N-terminal stretch at 1-20 is a signal peptide; that stretch reads MKKYLHILPACFLFYAAAHA. PbH1 repeat units lie at residues 256–278, 312–334, 421–443, 444–466, 477–507, and 517–547; these read SKNITLSRLQMHYMHGLGIVSQY, KGKVIIDSCYFAGAQDDPVNVHG, TPEVEIRNSYFTRTSTRGTLVTT, PRKVVIENNTYYKTGMSAILIEA, VKDVLIKGNTFIDCAYNGGPGHAVIAIHPSN, and HQNIRIEDNTFRTFDYPVLYAKSTAGLLFRN.

The protein belongs to the glycosyl hydrolase 110 family. A subfamily.

The catalysed reaction is Hydrolysis of terminal, non-reducing branched (1-&gt;3)-alpha-D-galactosidic residues, producing free D-galactose.. It carries out the reaction Hydrolysis of terminal, non-reducing alpha-D-galactose residues in alpha-D-galactosides, including galactose oligosaccharides, galactomannans and galactolipids.. Its function is as follows. Alpha-galactosidase that specifically removes branched alpha-1,3-linked galactose residues present in blood group B antigens. Has no activity toward linear alpha-1,3-linked galactose residues. The polypeptide is Alpha-1,3-galactosidase A (glaA) (Bacteroides fragilis (strain YCH46)).